The sequence spans 299 residues: YjeF N-terminal domain-containing protein 3 (299 aa).

Positions 74–287 (AAALERELLE…DVRRKFALRL (214 aa)) constitute a YjeF N-terminal domain.

In terms of assembly, interacts with APOA1. Binds to HDL. In terms of tissue distribution, expressed in theca cells in ovary and in Leydig cells in testis (at protein level). Also expressed in brain and mammary gland.

May accelerate cholesterol efflux from endothelial cells to high-density lipoprotein (HDL) and thereby regulates angiogenesis. May orchestrate hematopoietic stem and progenitor cell emergence from the hemogenic endothelium, a type of specialized endothelium manifesting hematopoietic potential. YJEFN3-mediated cholesterol efflux activates endothelial SREBF2, the master transcription factor for cholesterol biosynthesis, which in turn transactivates NOTCH and promotes hematopoietic stem and progenitor cell emergence. May play a role in spermiogenesis and oogenesis. The polypeptide is YjeF N-terminal domain-containing protein 3 (YJEFN3) (Homo sapiens (Human)).